A 1030-amino-acid polypeptide reads, in one-letter code: Tricorn protease (1030 aa).

The six-bladed beta propeller stretch occupies residues 1 to 270 (MANLLQNPDI…DNVKSLDIGP (270 aa)). The binds the substrate's C-terminus stretch occupies residues 93–94 (RR). Positions 286–635 (LEDFSMSPGD…EEEKSLNIDA (350 aa)) are seven-bladed beta propeller. Residues 641 to 712 (NVKEDFAEMY…RTSHSYEMGG (72 aa)) form a C-1 region. The active-site Charge relay system is the His706. The interval 721-816 (RAGRIACDFK…SGFVDVLQDD (96 aa)) is PDZ-like. Positions 817–1022 (RYIRYRAWVE…IEMVLADLEK (206 aa)) are C-2. 877-879 (GGG) contributes to the substrate binding site. Ser926 acts as the Nucleophile in catalysis. A substrate-binding site is contributed by 954–956 (GIS). The active-site Charge relay system is Glu984.

It belongs to the peptidase S41B family. In terms of assembly, part of the tricorn proteolytic complex.

It localises to the cytoplasm. Its function is as follows. Tricorn degrades oligopeptides in a sequential manner. The chain is Tricorn protease (tri) from Thermoplasma volcanium (strain ATCC 51530 / DSM 4299 / JCM 9571 / NBRC 15438 / GSS1).